We begin with the raw amino-acid sequence, 2225 residues long: Multifunctional protein CAD (2225 aa).

Ala-2 is subject to N-acetylalanine. Positions 2–365 (AALVLEDGSV…TVREAVAGNP (364 aa)) are GATase (Glutamine amidotransferase). 3 residues coordinate L-glutamine: Ser-44, Gly-222, and Gly-224. One can recognise a Glutamine amidotransferase type-1 domain in the interval 177–363 (RICALDCGLK…LETVREAVAG (187 aa)). The active-site Nucleophile; for GATase activity is the Cys-252. L-glutamine contacts are provided by Leu-253, Gln-256, Asn-294, Gly-296, and Phe-297. Catalysis depends on for GATase activity residues His-336 and Glu-338. The linker stretch occupies residues 366 to 394 (GGQTVKERLVQRLCPPGLLIPGSGLPPPR). The segment at 395–933 (KVLILGSGGL…NTHDLDFRTP (539 aa)) is CPSase A. Positions 395-1455 (KVLILGSGGL…APPLKVHVDC (1061 aa)) are CPSase (Carbamoyl phosphate synthase). Phosphothreonine; by MAPK1 is present on Thr-456. ATP-binding residues include Arg-515, Arg-555, Gly-561, Gly-562, Lys-592, Glu-599, Gly-625, Ile-626, His-627, Gln-668, and Glu-682. Positions 519 to 711 (AARMAEIGEH…LAYVAAKLAL (193 aa)) constitute an ATP-grasp 1 domain. Mg(2+) contacts are provided by Gln-668, Glu-682, and Asn-684. 3 residues coordinate Mn(2+): Gln-668, Glu-682, and Asn-684. N6-acetyllysine is present on Lys-747. The segment at 934 to 1455 (HVLVLGSGVY…APPLKVHVDC (522 aa)) is CPSase B. Ser-1038 is subject to Phosphoserine. Residues 1052-1243 (SRLLDTIGIS…LVALATRIIM (192 aa)) form the ATP-grasp 2 domain. Residues Arg-1088, Lys-1127, Ile-1129, Glu-1134, Gly-1159, Val-1160, His-1161, Ser-1162, Gln-1202, and Glu-1214 each contribute to the ATP site. Mg(2+) is bound by residues Gln-1202, Glu-1214, and Asn-1216. The Mn(2+) site is built by Gln-1202, Glu-1214, and Asn-1216. The 155-residue stretch at 1308–1462 (FKIPKKNILL…VDCMTSQKLV (155 aa)) folds into the MGS-like domain. At Ser-1406 the chain carries Phosphoserine; by PKA. Lys-1411 is subject to N6-acetyllysine. The DHOase (dihydroorotase) stretch occupies residues 1456–1788 (MTSQKLVRLP…VKGTIRRVVL (333 aa)). Zn(2+)-binding residues include His-1471 and His-1473. 2 residues coordinate (S)-dihydroorotate: Arg-1475 and Asn-1505. Zn(2+) contacts are provided by Lys-1556, His-1590, Cys-1613, His-1614, and Glu-1637. An N6-carboxylysine modification is found at Lys-1556. Arg-1661 contributes to the (S)-dihydroorotate binding site. Asp-1686 contributes to the Zn(2+) binding site. The active-site For DHOase activity is Asp-1686. His-1690 and Pro-1702 together coordinate (S)-dihydroorotate. A linker region spans residues 1789–1917 (RGEVAYIDGQ…GLLHPQTSPL (129 aa)). Residues 1813-1911 (PQGAVPQPPP…QNLGSSGLLH (99 aa)) form a disordered region. The span at 1825–1834 (PATTEITTTP) shows a compositional bias: low complexity. Ser-1859 is modified (phosphoserine; by RPS6KB1 and PKA). A compositionally biased stretch (basic and acidic residues) spans 1866 to 1878 (EEPKEKPSRKVVE). Ser-1873 is modified (phosphoserine; by PKC; in vitro). Phosphothreonine is present on Thr-1884. Residues 1899–1911 (ASPQNLGSSGLLH) are compositionally biased toward polar residues. Phosphoserine occurs at positions 1900 and 1938. The ATCase (Aspartate transcarbamylase) stretch occupies residues 1918-2225 (LHSLVGQHIL…ALLATVLGRF (308 aa)). Carbamoyl phosphate contacts are provided by Arg-1975 and Thr-1976. Lys-2003 serves as a coordination point for L-aspartate. Positions 2024, 2052, and 2055 each coordinate carbamoyl phosphate. L-aspartate-binding residues include Arg-2085 and Arg-2146. 2 residues coordinate carbamoyl phosphate: Met-2185 and Pro-2186.

In the N-terminal section; belongs to the CarA family. It in the 2nd section; belongs to the CarB family. The protein in the 3rd section; belongs to the metallo-dependent hydrolases superfamily. DHOase family. CAD subfamily. This sequence in the C-terminal section; belongs to the aspartate/ornithine carbamoyltransferase superfamily. ATCase family. Homohexamer. Interacts with CIPC. The cofactor is Zn(2+). Mg(2+) serves as cofactor. Mn(2+) is required as a cofactor. Activated by MAP kinase (Erk1/2) phosphorylation just prior to the S phase of the cell cycle, when the demand for pyrimidine nucleotides is greatest, and down-regulated as the cells emerge from S phase by protein kinase A (PKA) phosphorylation. Phosphorylation at Ser-1859 by RPS6KB1 downstream of MTOR promotes oligomerization and stimulates dihydroorotase activity. Phosphorylation at Ser-1406 reduces sensitivity to feedback inhibition by UTP.

It is found in the cytoplasm. The protein resides in the nucleus. It catalyses the reaction hydrogencarbonate + L-glutamine + 2 ATP + H2O = carbamoyl phosphate + L-glutamate + 2 ADP + phosphate + 2 H(+). The enzyme catalyses L-glutamine + H2O = L-glutamate + NH4(+). The catalysed reaction is hydrogencarbonate + NH4(+) + 2 ATP = carbamoyl phosphate + 2 ADP + phosphate + 2 H(+). It carries out the reaction carbamoyl phosphate + L-aspartate = N-carbamoyl-L-aspartate + phosphate + H(+). It catalyses the reaction (S)-dihydroorotate + H2O = N-carbamoyl-L-aspartate + H(+). It participates in pyrimidine metabolism; UMP biosynthesis via de novo pathway; (S)-dihydroorotate from bicarbonate: step 1/3. The protein operates within pyrimidine metabolism; UMP biosynthesis via de novo pathway; (S)-dihydroorotate from bicarbonate: step 2/3. It functions in the pathway pyrimidine metabolism; UMP biosynthesis via de novo pathway; (S)-dihydroorotate from bicarbonate: step 3/3. With respect to regulation, allosterically regulated and controlled by phosphorylation. 5-phosphoribose 1-diphosphate (PRPP) is an activator while UMP and UTP are inhibitors of the CPSase reaction. Functionally, multifunctional protein that encodes the first 3 enzymatic activities of the de novo pyrimidine pathway: carbamoylphosphate synthetase (CPSase; EC 6.3.5.5), aspartate transcarbamylase (ATCase; EC 2.1.3.2) and dihydroorotase (DHOase; EC 3.5.2.3). The CPSase-function is accomplished in 2 steps, by a glutamine-dependent amidotransferase activity (GATase) that binds and cleaves glutamine to produce ammonia, followed by an ammonium-dependent carbamoyl phosphate synthetase, which reacts with the ammonia, hydrogencarbonate and ATP to form carbamoyl phosphate. The endogenously produced carbamoyl phosphate is sequestered and channeled to the ATCase active site. ATCase then catalyzes the formation of carbamoyl-L-aspartate from L-aspartate and carbamoyl phosphate. In the last step, DHOase catalyzes the cyclization of carbamoyl aspartate to dihydroorotate. The polypeptide is Multifunctional protein CAD (CAD) (Mesocricetus auratus (Golden hamster)).